Reading from the N-terminus, the 122-residue chain is Large ribosomal subunit protein uL14 (122 aa).

This sequence belongs to the universal ribosomal protein uL14 family. As to quaternary structure, part of the 50S ribosomal subunit. Forms a cluster with proteins L3 and L19. In the 70S ribosome, L14 and L19 interact and together make contacts with the 16S rRNA in bridges B5 and B8.

Functionally, binds to 23S rRNA. Forms part of two intersubunit bridges in the 70S ribosome. This is Large ribosomal subunit protein uL14 from Leuconostoc mesenteroides subsp. mesenteroides (strain ATCC 8293 / DSM 20343 / BCRC 11652 / CCM 1803 / JCM 6124 / NCDO 523 / NBRC 100496 / NCIMB 8023 / NCTC 12954 / NRRL B-1118 / 37Y).